A 346-amino-acid polypeptide reads, in one-letter code: Farnesyl diphosphate synthase 1 (346 aa).

Positions 52, 55, and 90 each coordinate isopentenyl diphosphate. Positions 97 and 101 each coordinate Mg(2+). Positions 97-101 (DDIMD) match the DDXXD motif motif. Arg106 contributes to the dimethylallyl diphosphate binding site. Arg107 serves as a coordination point for isopentenyl diphosphate. Dimethylallyl diphosphate-binding residues include Lys194, Thr195, and Gln233. Residues 236–240 (DDYLD) carry the DDXXD motif motif. Residues Lys250 and Lys259 each coordinate dimethylallyl diphosphate.

This sequence belongs to the FPP/GGPP synthase family. Mg(2+) is required as a cofactor. The cofactor is Mn(2+). Highly expressed in shoots.

The catalysed reaction is isopentenyl diphosphate + (2E)-geranyl diphosphate = (2E,6E)-farnesyl diphosphate + diphosphate. The enzyme catalyses isopentenyl diphosphate + dimethylallyl diphosphate = (2E)-geranyl diphosphate + diphosphate. It functions in the pathway isoprenoid biosynthesis; farnesyl diphosphate biosynthesis; farnesyl diphosphate from geranyl diphosphate and isopentenyl diphosphate: step 1/1. It participates in isoprenoid biosynthesis; geranyl diphosphate biosynthesis; geranyl diphosphate from dimethylallyl diphosphate and isopentenyl diphosphate: step 1/1. In terms of biological role, catalyzes the sequential condensation of isopentenyl pyrophosphate (IPP) with the allylic pyrophosphates, dimethylallyl pyrophosphate (DMAPP), and then with the resultant geranylpyrophosphate (GPP) to the ultimate product farnesyl pyrophosphate (FPP). Has a 4.5 time greater affinity for GPP versus DMAPP. The sequence is that of Farnesyl diphosphate synthase 1 (FDS-1) from Artemisia spiciformis (Spiked big sagebrush).